A 253-amino-acid polypeptide reads, in one-letter code: MANLGCWMLVLFVATWSDLGLCKKRPKPGGWNTGGSRYPGQGSPGGNRYPPQGGGGWGQPHGGGWGQPHGGGWGQPHGGGWGQPHGGGWGQGGGTHSQWNKPSKPKTNMKHMAGAAAAGAVVGGLGGYMLGSAMSRPIIHFGSDYEDRYYRENMHRYPNQVYYRPMDQYSSQNNFVHDCVNITIKQHTVTTTTKGENFTETDVKMMERVVEQMCITQYERESQAYYQRGSSMVLFSSPPVILLISFLIFLIVG.

The N-terminal stretch at 1-22 is a signal peptide; sequence MANLGCWMLVLFVATWSDLGLC. The tract at residues 23–230 is interaction with GRB2, ERI3 and SYN1; it reads KKRPKPGGWN…ESQAYYQRGS (208 aa). The interval 26–108 is disordered; it reads PKPGGWNTGG…WNKPSKPKTN (83 aa). 5 tandem repeats follow at residues 51–59, 60–67, 68–75, 76–83, and 84–91. The tract at residues 51-91 is 5 X 8 AA tandem repeats of P-H-G-G-G-W-G-Q; sequence PQGGGGWGQPHGGGWGQPHGGGWGQPHGGGWGQPHGGGWGQ. Gly residues predominate over residues 52 to 95; that stretch reads QGGGGWGQPHGGGWGQPHGGGWGQPHGGGWGQPHGGGWGQGGGT. Cu(2+) is bound by residues His-61, Gly-62, Gly-63, His-69, Gly-70, Gly-71, His-77, Gly-78, Gly-79, His-85, Gly-86, and Gly-87. Residues Cys-179 and Cys-214 are joined by a disulfide bond. 2 N-linked (GlcNAc...) asparagine glycosylation sites follow: Asn-181 and Asn-197. Ser-230 carries GPI-anchor amidated serine lipidation. A propeptide spans 231-253 (removed in mature form); that stretch reads SMVLFSSPPVILLISFLIFLIVG.

It belongs to the prion family. Monomer and homodimer. Has a tendency to aggregate into amyloid fibrils containing a cross-beta spine, formed by a steric zipper of superposed beta-strands. Soluble oligomers may represent an intermediate stage on the path to fibril formation. Copper binding may promote oligomerization. Interacts with GRB2, APP, ERI3/PRNPIP and SYN1. Mislocalized cytosolically exposed PrP interacts with MGRN1; this interaction alters MGRN1 subcellular location and causes lysosomal enlargement. Interacts with KIAA1191.

Its subcellular location is the cell membrane. It localises to the golgi apparatus. Its primary physiological function is unclear. Has cytoprotective activity against internal or environmental stresses. May play a role in neuronal development and synaptic plasticity. May be required for neuronal myelin sheath maintenance. May play a role in iron uptake and iron homeostasis. Soluble oligomers are toxic to cultured neuroblastoma cells and induce apoptosis (in vitro). Association with GPC1 (via its heparan sulfate chains) targets PRNP to lipid rafts. Also provides Cu(2+) or Zn(2+) for the ascorbate-mediated GPC1 deaminase degradation of its heparan sulfate side chains. The polypeptide is Major prion protein (PRNP) (Hylobates lar (Lar gibbon)).